A 5082-amino-acid polypeptide reads, in one-letter code: Malformin synthetase mlfA (5082 aa).

The tract at residues 225-616 (ERHAANRPHS…CGRADTQVKL (392 aa)) is adenylation 1. The 74-residue stretch at 749–822 (SRLEQKIQLA…EAASLAEVQE (74 aa)) folds into the Carrier 1 domain. Residue serine 783 is modified to O-(pantetheine 4'-phosphoryl)serine. The condensation 1 stretch occupies residues 860 to 1291 (ENVFPCTTMQ…ALNTLSLLQA (432 aa)). Residues 1319-1708 (DRWVTRQPEG…GRKDTQVKLR (390 aa)) are adenylation 2. The Carrier 2 domain occupies 1846-1923 (TPTLELERTL…QLAAEVGEPA (78 aa)). Residue serine 1883 is modified to O-(pantetheine 4'-phosphoryl)serine. 2 disordered regions span residues 1924–1953 (GQSA…DGVD) and 1986–2012 (GGSS…KKNA). Low complexity-rich tracts occupy residues 1926–1950 (SASS…STND) and 1988–2005 (SSSN…SSSS). Residues 2058-2473 (EDIYPATALQ…AVSCSDKETL (416 aa)) are condensation 2. The segment at 2496–2888 (RRTPHAPAVC…IGRRDGQLKL (393 aa)) is adenylation 3. In terms of domain architecture, Carrier 3 spans 3024 to 3100 (RPVTSQEHEM…QLICHLNTIR (77 aa)). Serine 3061 carries the O-(pantetheine 4'-phosphoryl)serine modification. Condensation stretches follow at residues 3117-3582 (WVAL…TYDQ) and 3603-4022 (NIYP…EHLV). The segment at 4047–4426 (HNSRQAVFDD…VGRKDNQIKF (380 aa)) is adenylation 4. A Carrier 4 domain is found at 4560–4636 (MPSTAAERKM…DLSDQAKSLI (77 aa)). Residue serine 4597 is modified to O-(pantetheine 4'-phosphoryl)serine. The segment at 4673–5000 (DVLPTTSFQR…LQTIVQHQNN (328 aa)) is condensation 5.

This sequence belongs to the NRP synthetase family.

The protein operates within secondary metabolite biosynthesis. Functionally, nonribosomal peptide synthetase; part of the gene cluster that mediates the biosynthesis of malformins, cyclic pentapeptides with a disulfide bond between 2 consecutive cysteins, that show potential anti-tumor as well as antimalarial and antitrypanosomal properties. The nonribosomal peptide synthetase mlfA is responsible of the formation of the cyclic pentapeptide. The malformin biosynthesis clusters in malformin-producing fungi also contain enzymes involved in the formation of the disulfide bond between the two consecutive cysteins within malformins, in addition to additional tailoring enzymes such as methyltransferases or oxidoreductases. They are also composed of up to 4 major facilitator superfamily transporters, and transcription factors probably involved in the regulation of the expression of those clusters. The polypeptide is Malformin synthetase mlfA (Aspergillus luchuensis (strain CBS 106.47)).